The following is a 248-amino-acid chain: Ubiquinone/menaquinone biosynthesis C-methyltransferase UbiE (248 aa).

S-adenosyl-L-methionine is bound by residues S68, D92, and 120–121 (NA).

The protein belongs to the class I-like SAM-binding methyltransferase superfamily. MenG/UbiE family.

It catalyses the reaction a 2-demethylmenaquinol + S-adenosyl-L-methionine = a menaquinol + S-adenosyl-L-homocysteine + H(+). The enzyme catalyses a 2-methoxy-6-(all-trans-polyprenyl)benzene-1,4-diol + S-adenosyl-L-methionine = a 5-methoxy-2-methyl-3-(all-trans-polyprenyl)benzene-1,4-diol + S-adenosyl-L-homocysteine + H(+). It participates in quinol/quinone metabolism; menaquinone biosynthesis; menaquinol from 1,4-dihydroxy-2-naphthoate: step 2/2. It functions in the pathway cofactor biosynthesis; ubiquinone biosynthesis. Functionally, methyltransferase required for the conversion of demethylmenaquinol (DMKH2) to menaquinol (MKH2) and the conversion of 2-polyprenyl-6-methoxy-1,4-benzoquinol (DDMQH2) to 2-polyprenyl-3-methyl-6-methoxy-1,4-benzoquinol (DMQH2). This is Ubiquinone/menaquinone biosynthesis C-methyltransferase UbiE from Rickettsia prowazekii (strain Madrid E).